A 109-amino-acid polypeptide reads, in one-letter code: Large ribosomal subunit protein uL22 (109 aa).

It belongs to the universal ribosomal protein uL22 family. As to quaternary structure, part of the 50S ribosomal subunit.

Its function is as follows. This protein binds specifically to 23S rRNA; its binding is stimulated by other ribosomal proteins, e.g. L4, L17, and L20. It is important during the early stages of 50S assembly. It makes multiple contacts with different domains of the 23S rRNA in the assembled 50S subunit and ribosome. Functionally, the globular domain of the protein is located near the polypeptide exit tunnel on the outside of the subunit, while an extended beta-hairpin is found that lines the wall of the exit tunnel in the center of the 70S ribosome. The polypeptide is Large ribosomal subunit protein uL22 (Dehalococcoides mccartyi (strain ATCC BAA-2100 / JCM 16839 / KCTC 5957 / BAV1)).